A 188-amino-acid chain; its full sequence is Probable nicotinate-nucleotide adenylyltransferase (188 aa).

This sequence belongs to the NadD family.

It carries out the reaction nicotinate beta-D-ribonucleotide + ATP + H(+) = deamido-NAD(+) + diphosphate. It participates in cofactor biosynthesis; NAD(+) biosynthesis; deamido-NAD(+) from nicotinate D-ribonucleotide: step 1/1. Catalyzes the reversible adenylation of nicotinate mononucleotide (NaMN) to nicotinic acid adenine dinucleotide (NaAD). The sequence is that of Probable nicotinate-nucleotide adenylyltransferase from Salinispora arenicola (strain CNS-205).